Consider the following 338-residue polypeptide: Inositol 2-dehydrogenase (338 aa).

It belongs to the Gfo/Idh/MocA family. In terms of assembly, homotetramer.

It catalyses the reaction myo-inositol + NAD(+) = scyllo-inosose + NADH + H(+). In terms of biological role, involved in the oxidation of myo-inositol (MI) to 2-keto-myo-inositol (2KMI or 2-inosose). The protein is Inositol 2-dehydrogenase of Azotobacter vinelandii (strain DJ / ATCC BAA-1303).